Reading from the N-terminus, the 531-residue chain is Transmembrane protein 266 (531 aa).

Topologically, residues 1–102 (MALAASFNMT…VFLLSASLNS (102 aa)) are cytoplasmic. The helical transmembrane segment at 103-123 (FLVACVILVVILLTLELLIDI) threads the bilayer. Residues 124–129 (KLLQFS) lie on the Extracellular side of the membrane. The chain crosses the membrane as a helical span at residues 130 to 150 (SAFQFAGVIHWISLVILSVFF). The Cytoplasmic portion of the chain corresponds to 151 to 169 (SETVLRIVVLGIWDYIENK). A helical membrane pass occupies residues 170 to 190 (IEVFDGAVIILSLAPMVASTV). Over 191–199 (ANGPRSPWD) the chain is Extracellular. Residues 200–220 (AISLIIMLRIWRVKRVIDAYV) form a helical membrane-spanning segment. At 221–531 (LPVKLEMEMV…EQKLHRVPEA (311 aa)) the chain is on the cytoplasmic side. A coiled-coil region spans residues 231-251 (IQQYEKAKVIQDEQLERLTQI). A disordered region spans residues 380-477 (NGTGATSESA…PAGSAQTSPE (98 aa)). Positions 383–412 (GATSESASRSSVTRAQSDSSQTLGSSTDCS) are enriched in polar residues. A compositionally biased stretch (pro residues) spans 421-431 (EPGPSPLPLPP).

In terms of assembly, homodimer; disulfide-linked.

It localises to the cell membrane. It is found in the cell projection. Its subcellular location is the dendrite. The protein resides in the perikaryon. Functionally, voltage-sensor protein present on the post-synaptic side of glutamatergic mossy fibers and granule cells in the cerebellum. Despite the presence of a voltage-sensor segment, does not form a functional ion channel and its precise role remains unclear. Undergoes both rapid and slow structural rearrangements in response to changes in voltage. Contains a zinc-binding site that can regulate the slow conformational transition. The protein is Transmembrane protein 266 of Macaca fascicularis (Crab-eating macaque).